Consider the following 184-residue polypeptide: ATP synthase subunit b, chloroplastic (184 aa).

The chain crosses the membrane as a helical span at residues 31–53; sequence LINLSVVLGVLIYFGKGVLSNLL.

This sequence belongs to the ATPase B chain family. In terms of assembly, F-type ATPases have 2 components, F(1) - the catalytic core - and F(0) - the membrane proton channel. F(1) has five subunits: alpha(3), beta(3), gamma(1), delta(1), epsilon(1). F(0) has four main subunits: a(1), b(1), b'(1) and c(10-14). The alpha and beta chains form an alternating ring which encloses part of the gamma chain. F(1) is attached to F(0) by a central stalk formed by the gamma and epsilon chains, while a peripheral stalk is formed by the delta, b and b' chains.

The protein localises to the plastid. The protein resides in the chloroplast thylakoid membrane. In terms of biological role, f(1)F(0) ATP synthase produces ATP from ADP in the presence of a proton or sodium gradient. F-type ATPases consist of two structural domains, F(1) containing the extramembraneous catalytic core and F(0) containing the membrane proton channel, linked together by a central stalk and a peripheral stalk. During catalysis, ATP synthesis in the catalytic domain of F(1) is coupled via a rotary mechanism of the central stalk subunits to proton translocation. Its function is as follows. Component of the F(0) channel, it forms part of the peripheral stalk, linking F(1) to F(0). This is ATP synthase subunit b, chloroplastic from Cycas taitungensis (Prince sago).